Reading from the N-terminus, the 908-residue chain is SKI/DACH domain-containing protein 1 (908 aa).

The span at 337–353 shows a compositional bias: basic residues; that stretch reads HHHHHHHHHHHHHHHRA. The interval 337 to 461 is disordered; it reads HHHHHHHHHH…SSSGSSQVSV (125 aa). Low complexity-rich tracts occupy residues 370-389 and 396-410; these read PHLG…SSYS and SDFG…NSVS. Acidic residues predominate over residues 411-429; sequence SEEEEEEGEEEEEEEEEEG. Residues 449 to 461 are compositionally biased toward low complexity; that stretch reads ESDSSSGSSQVSV. Lysine 688 is covalently cross-linked (Glycyl lysine isopeptide (Lys-Gly) (interchain with G-Cter in SUMO2)). Disordered stretches follow at residues 744–763 and 792–818; these read ETPS…TLGS and LQTP…TNEG. Residues 746–761 are compositionally biased toward polar residues; it reads PSLNPLAQSQGLSCTL.

The protein belongs to the DACH/dachshund family.

The polypeptide is SKI/DACH domain-containing protein 1 (SKIDA1) (Homo sapiens (Human)).